The chain runs to 239 residues: Probable transcriptional regulatory protein YeeI (239 aa).

This sequence belongs to the TACO1 family. YeeN subfamily.

The protein localises to the cytoplasm. In Bacillus subtilis (strain 168), this protein is Probable transcriptional regulatory protein YeeI (yeeI).